The primary structure comprises 456 residues: Solute carrier family 38 member 6 (456 aa).

Residue Met1 is modified to N-acetylmethionine. A phosphoserine mark is found at Ser4 and Ser7. 5 consecutive transmembrane segments (helical) span residues 42–62 (SPGV…MGSG), 85–105 (VALL…QTAV), 111–131 (LGLF…IIIQ), 170–190 (LLII…KIGF), and 191–211 (LGYT…VVII). An intrachain disulfide couples Cys218 to Cys238. Asn233 carries an N-linked (GlcNAc...) asparagine glycan. A helical membrane pass occupies residues 250–270 (AYALPTMAFSFLCHTSILPIY). Residue Asn283 is glycosylated (N-linked (GlcNAc...) asparagine). Transmembrane regions (helical) follow at residues 288–308 (AIAL…LTFY), 327–347 (VVVM…VPLI), 371–391 (FLIT…VPDI), 394–414 (VFGV…PGLF), and 431–451 (AFVL…LIIF).

This sequence belongs to the amino acid/polyamine transporter 2 family.

It localises to the cell membrane. Its subcellular location is the synapse. The catalysed reaction is L-glutamine(out) = L-glutamine(in). It catalyses the reaction L-glutamate(out) = L-glutamate(in). Functionally, amino acid transporter with an apparent selectivity for L-glutamine and L-glutamate. May facilitate glutamine uptake in excitatory neurons. The transport mechanism remains to be elucidated. The protein is Solute carrier family 38 member 6 of Homo sapiens (Human).